The primary structure comprises 162 residues: NADH-quinone oxidoreductase subunit I (162 aa).

2 consecutive 4Fe-4S ferredoxin-type domains span residues 53–83 and 93–122; these read LRRY…IESE and TRYD…EGPN. The [4Fe-4S] cluster site is built by Cys63, Cys66, Cys69, Cys73, Cys102, Cys105, Cys108, and Cys112.

The protein belongs to the complex I 23 kDa subunit family. In terms of assembly, NDH-1 is composed of 14 different subunits. Subunits NuoA, H, J, K, L, M, N constitute the membrane sector of the complex. It depends on [4Fe-4S] cluster as a cofactor.

The protein localises to the cell inner membrane. It catalyses the reaction a quinone + NADH + 5 H(+)(in) = a quinol + NAD(+) + 4 H(+)(out). Functionally, NDH-1 shuttles electrons from NADH, via FMN and iron-sulfur (Fe-S) centers, to quinones in the respiratory chain. The immediate electron acceptor for the enzyme in this species is believed to be ubiquinone. Couples the redox reaction to proton translocation (for every two electrons transferred, four hydrogen ions are translocated across the cytoplasmic membrane), and thus conserves the redox energy in a proton gradient. This Erythrobacter litoralis (strain HTCC2594) protein is NADH-quinone oxidoreductase subunit I.